We begin with the raw amino-acid sequence, 254 residues long: Thiazole synthase (254 aa).

Residue K95 is the Schiff-base intermediate with DXP of the active site. 1-deoxy-D-xylulose 5-phosphate-binding positions include G156, 182 to 183 (AG), and 204 to 205 (NT).

This sequence belongs to the ThiG family. In terms of assembly, homotetramer. Forms heterodimers with either ThiH or ThiS.

It localises to the cytoplasm. The catalysed reaction is [ThiS sulfur-carrier protein]-C-terminal-Gly-aminoethanethioate + 2-iminoacetate + 1-deoxy-D-xylulose 5-phosphate = [ThiS sulfur-carrier protein]-C-terminal Gly-Gly + 2-[(2R,5Z)-2-carboxy-4-methylthiazol-5(2H)-ylidene]ethyl phosphate + 2 H2O + H(+). Its pathway is cofactor biosynthesis; thiamine diphosphate biosynthesis. Its function is as follows. Catalyzes the rearrangement of 1-deoxy-D-xylulose 5-phosphate (DXP) to produce the thiazole phosphate moiety of thiamine. Sulfur is provided by the thiocarboxylate moiety of the carrier protein ThiS. In vitro, sulfur can be provided by H(2)S. The sequence is that of Thiazole synthase from Shewanella sediminis (strain HAW-EB3).